The chain runs to 480 residues: RuvB-like helicase 2 (480 aa).

Position 73-80 (73-80 (GEPSTGKT)) interacts with ATP.

Belongs to the RuvB family. In terms of assembly, forms homohexameric rings. May form a dodecamer with rept made of two stacked hexameric rings. Component of the chromatin remodeling Ino80 complex.

The protein localises to the nucleus. It carries out the reaction ATP + H2O = ADP + phosphate + H(+). In terms of biological role, acts as a transcriptional coactivator in Wg signaling caused by altered arm signaling. Pont and rept interfere antagonistically with nuclear arm signaling function, and are required to enhance or reduce arm activity, respectively. Also an essential cofactor for the normal function of Myc; required for cellular proliferation and growth. Proposed core component of the chromatin remodeling Ino80 complex which is involved in transcriptional regulation, DNA replication and probably DNA repair. The protein is RuvB-like helicase 2 of Drosophila pseudoobscura pseudoobscura (Fruit fly).